Here is a 935-residue protein sequence, read N- to C-terminus: Protein translocase subunit SecA (935 aa).

ATP is bound by residues Gln-86, 104–108, and Asp-494; that span reads GEGKT. The disordered stretch occupies residues 879–935; the sequence is EQAATARAQQHSSAAVAAPEQGATQRGAFGQRVSAADDAAPANRAERRAQKKPTKRH.

This sequence belongs to the SecA family. As to quaternary structure, monomer and homodimer. Part of the essential Sec protein translocation apparatus which comprises SecA, SecYEG and auxiliary proteins SecDF. Other proteins may also be involved.

The protein resides in the cell membrane. It is found in the cytoplasm. It carries out the reaction ATP + H2O + cellular proteinSide 1 = ADP + phosphate + cellular proteinSide 2.. Part of the Sec protein translocase complex. Interacts with the SecYEG preprotein conducting channel. Has a central role in coupling the hydrolysis of ATP to the transfer of proteins into and across the cell membrane, serving as an ATP-driven molecular motor driving the stepwise translocation of polypeptide chains across the membrane. The polypeptide is Protein translocase subunit SecA (Leifsonia xyli subsp. xyli (strain CTCB07)).